The sequence spans 142 residues: Large ribosomal subunit protein uL11 (142 aa).

It belongs to the universal ribosomal protein uL11 family. Part of the ribosomal stalk of the 50S ribosomal subunit. Interacts with L10 and the large rRNA to form the base of the stalk. L10 forms an elongated spine to which L12 dimers bind in a sequential fashion forming a multimeric L10(L12)X complex. In terms of processing, one or more lysine residues are methylated.

Functionally, forms part of the ribosomal stalk which helps the ribosome interact with GTP-bound translation factors. The sequence is that of Large ribosomal subunit protein uL11 from Rhodopseudomonas palustris (strain BisB5).